We begin with the raw amino-acid sequence, 100 residues long: Urease subunit gamma (100 aa).

It belongs to the urease gamma subunit family. Heterotrimer of UreA (gamma), UreB (beta) and UreC (alpha) subunits. Three heterotrimers associate to form the active enzyme.

Its subcellular location is the cytoplasm. The enzyme catalyses urea + 2 H2O + H(+) = hydrogencarbonate + 2 NH4(+). Its pathway is nitrogen metabolism; urea degradation; CO(2) and NH(3) from urea (urease route): step 1/1. This chain is Urease subunit gamma, found in Ruegeria sp. (strain TM1040) (Silicibacter sp.).